Consider the following 324-residue polypeptide: Olfactory receptor 4K15 (324 aa).

Residues 1–25 (MNETNHSRVTEFVLLGLSSSRELQP) are Extracellular-facing. N-linked (GlcNAc...) asparagine glycans are attached at residues asparagine 2 and asparagine 5. Residues 26–49 (FLFLTFSLLYLAILLGNFLIILTV) form a helical membrane-spanning segment. Residues 50–57 (TSDSRLHT) lie on the Cytoplasmic side of the membrane. A helical membrane pass occupies residues 58–79 (PMYFLLANLSFIDVCVASFATP). Topologically, residues 80–100 (KMIADFLVERKTISFDACLAQ) are extracellular. The cysteines at positions 97 and 189 are disulfide-linked. Residues 101–120 (IFFVHLFTGSEMVLLVSMAY) traverse the membrane as a helical segment. The Cytoplasmic portion of the chain corresponds to 121-139 (DRYVAICKPLHYMTVMSRR). The helical transmembrane segment at 140–158 (VCVVLVLISWFVGFIHTTS) threads the bilayer. The Extracellular segment spans residues 159–195 (QLAFTVNLPFCGPNKVDSFFCDLPLVTKLACIDTYVV). Residues 196-219 (SLLIVADSGFLSLSSFLLLVVSYT) form a helical membrane-spanning segment. Residues 220–235 (VILVTVRNRSSASMAK) are Cytoplasmic-facing. A helical transmembrane segment spans residues 236-258 (ARSTLTAHITVVTLFFGPCIFIY). The Extracellular segment spans residues 259-269 (VWPFSSYSVDK). A helical membrane pass occupies residues 270 to 289 (VLAVFYTIFTLILNPVIYTL). Residues 290–324 (RNKEVKAAMSKLKSRYLKPSQVSVVIRNVLFLETK) are Cytoplasmic-facing.

Belongs to the G-protein coupled receptor 1 family.

The protein resides in the cell membrane. In terms of biological role, odorant receptor. The polypeptide is Olfactory receptor 4K15 (OR4K15) (Homo sapiens (Human)).